The following is a 234-amino-acid chain: Large ribosomal subunit protein uL1 (234 aa).

It belongs to the universal ribosomal protein uL1 family. In terms of assembly, part of the 50S ribosomal subunit.

Binds directly to 23S rRNA. The L1 stalk is quite mobile in the ribosome, and is involved in E site tRNA release. Its function is as follows. Protein L1 is also a translational repressor protein, it controls the translation of the L11 operon by binding to its mRNA. The polypeptide is Large ribosomal subunit protein uL1 (Helicobacter acinonychis (strain Sheeba)).